Here is a 182-residue protein sequence, read N- to C-terminus: Ribosome-recycling factor (182 aa).

The protein belongs to the RRF family.

The protein localises to the cytoplasm. Functionally, responsible for the release of ribosomes from messenger RNA at the termination of protein biosynthesis. May increase the efficiency of translation by recycling ribosomes from one round of translation to another. In Prochlorococcus marinus (strain MIT 9215), this protein is Ribosome-recycling factor.